A 453-amino-acid chain; its full sequence is MKSTFKEERIKDDSKRRDLFVFVRQTMCIAAMYPFGYYVNGSGVLAVLVRFCDLTYELFNYFVSVHIAGLYICTIYINYGQGDLDFFVNCLIQTIIYLWTIAMKLYFRRFRPGLLNTILSNINDEYETRSAVGFSFVTMAGSYRMSKLWIKTYVYCCYIGTIFWLALPIAYRDRSLPLACWYPFDYTQPGVYEVVFLLQAMGQIQVAASFASSSGLHMVLCVLISGQYDVLFCSLKNVLASSYVLMGANMTELNQLQAEQSAADVEPGQYAYSVEEETPLQELLKVGSSMDFSSAFRLSFVRCIQHHRYIVAALKKIESFYSPIWFVKIGEVTFLMCLVAFVSTKSTAANSFMRMVSLGQYLLLVLYELFIICYFADIVFQNSQRCGEALWRSPWQRHLKDVRSDYMFFMLNSRRQFQLTAGKISNLNVDRFRGTITTAFSFLTLLQKMDARE.

Residues 1–28 (MKSTFKEERIKDDSKRRDLFVFVRQTMC) are Cytoplasmic-facing. The helical transmembrane segment at 29–49 (IAAMYPFGYYVNGSGVLAVLV) threads the bilayer. The Extracellular segment spans residues 50 to 85 (RFCDLTYELFNYFVSVHIAGLYICTIYINYGQGDLD). The chain crosses the membrane as a helical span at residues 86-106 (FFVNCLIQTIIYLWTIAMKLY). Residues 107–148 (FRRFRPGLLNTILSNINDEYETRSAVGFSFVTMAGSYRMSKL) are Cytoplasmic-facing. A helical transmembrane segment spans residues 149-169 (WIKTYVYCCYIGTIFWLALPI). The Extracellular portion of the chain corresponds to 170–203 (AYRDRSLPLACWYPFDYTQPGVYEVVFLLQAMGQ). The chain crosses the membrane as a helical span at residues 204–224 (IQVAASFASSSGLHMVLCVLI). Topologically, residues 225–322 (SGQYDVLFCS…ALKKIESFYS (98 aa)) are cytoplasmic. Residues 323–343 (PIWFVKIGEVTFLMCLVAFVS) form a helical membrane-spanning segment. Topologically, residues 344-359 (TKSTAANSFMRMVSLG) are extracellular. Residues 360 to 380 (QYLLLVLYELFIICYFADIVF) traverse the membrane as a helical segment. Residues 381-408 (QNSQRCGEALWRSPWQRHLKDVRSDYMF) lie on the Cytoplasmic side of the membrane. A helical transmembrane segment spans residues 409-429 (FMLNSRRQFQLTAGKISNLNV). Residues 430–453 (DRFRGTITTAFSFLTLLQKMDARE) lie on the Extracellular side of the membrane.

This sequence belongs to the insect chemoreceptor superfamily. Heteromeric odorant receptor channel (TC 1.A.69) family. Or2a subfamily. Interacts with Orco. Complexes exist early in the endomembrane system in olfactory sensory neurons (OSNs), coupling these complexes to the conserved ciliary trafficking pathway.

Its subcellular location is the cell membrane. Its function is as follows. Odorant receptor which mediates acceptance or avoidance behavior, depending on its substrates. The odorant receptor repertoire encodes a large collection of odor stimuli that vary widely in identity, intensity, and duration. May form a complex with Orco to form odorant-sensing units, providing sensitive and prolonged odorant signaling and calcium permeability. Involved in the behavioral responses to pentanol, ethyl acetate, and propyl acetate. In Drosophila melanogaster (Fruit fly), this protein is Odorant receptor 83a (Or83a).